Reading from the N-terminus, the 365-residue chain is Cobalt-precorrin-5B C(1)-methyltransferase (365 aa).

The protein belongs to the CbiD family.

The enzyme catalyses Co-precorrin-5B + S-adenosyl-L-methionine = Co-precorrin-6A + S-adenosyl-L-homocysteine. It functions in the pathway cofactor biosynthesis; adenosylcobalamin biosynthesis; cob(II)yrinate a,c-diamide from sirohydrochlorin (anaerobic route): step 6/10. Its function is as follows. Catalyzes the methylation of C-1 in cobalt-precorrin-5B to form cobalt-precorrin-6A. The polypeptide is Cobalt-precorrin-5B C(1)-methyltransferase (Pseudomonas fluorescens (strain Pf0-1)).